A 1055-amino-acid chain; its full sequence is Vacuolar protein sorting-associated protein 54 (1055 aa).

A coiled-coil region spans residues 363–383 (TKKIIEVHQKYEQKKHLLAKL). The disordered stretch occupies residues 774–794 (IDDGPTKKPFKRTGSSATIDS).

This sequence belongs to the VPS54 family. Component of the Golgi-associated retrograde protein (GARP) complex, also called VFT (VPS fifty-three) complex, composed of VPS51, VPS52, VPS53 and VPS54.

The protein resides in the golgi apparatus. The protein localises to the trans-Golgi network. Functionally, acts as a component of the GARP complex that is involved in retrograde transport from early and late endosomes to the trans-Golgi network (TGN). The GARP complex facilitates tethering as well as SNARE complex assembly at the Golgi. This chain is Vacuolar protein sorting-associated protein 54 (vps-54), found in Caenorhabditis briggsae.